Here is a 589-residue protein sequence, read N- to C-terminus: PTS system mannitol-specific EIICB component (589 aa).

The Cytoplasmic portion of the chain corresponds to 1-25; it reads MEEKVSLKVRVQKLGTSLSNMVMPN. The PTS EIIC type-2 domain occupies 14–347; the sequence is LGTSLSNMVM…LHADKSTEDS (334 aa). The chain crosses the membrane as a helical span at residues 26–47; that stretch reads IGAFIAWGVLTALFIADGYLPN. Residues 48-51 are Extracellular-facing; sequence EQLA. The helical transmembrane segment at 52 to 72 threads the bilayer; that stretch reads TVVGPMLTYLLPILIGYTGGY. Over 73-135 the chain is Cytoplasmic; sequence MIHGQRGAVV…PGFEMLVNNF (63 aa). The helical transmembrane segment at 136–157 threads the bilayer; it reads SAGLVGFALLLLAFYAIGPVVS. Residues 158–166 are Extracellular-facing; it reads TLTGAVGNG. The chain crosses the membrane as a helical span at residues 167–187; it reads VEAIVNARLLPMANIIIEPAK. The Cytoplasmic portion of the chain corresponds to 188 to 274; that stretch reads VLFLNNALNH…VMMKPTLFLA (87 aa). A helical transmembrane segment spans residues 275 to 294; that stretch reads AMAGGISGTFTFQLLDAGLK. Topologically, residues 295–316 are extracellular; the sequence is SPASPGSIIAIIATAPKGVWPH. A helical membrane pass occupies residues 317-338; the sequence is LNVLLGVLVAAVVSFLVAALIL. Topologically, residues 339–589 are cytoplasmic; the sequence is HADKSTEDSL…YDKMAARMYK (251 aa). Residues 381–476 enclose the PTS EIIB type-2 domain; sequence EKIIFACDAG…SLTGASPIAE (96 aa). C387 (phosphocysteine intermediate; for EIIB activity) is an active-site residue. C387 is modified (phosphocysteine; by EIIA).

Homodimer.

The protein resides in the cell membrane. It carries out the reaction D-mannitol(out) + N(pros)-phospho-L-histidyl-[protein] = D-mannitol 1-phosphate(in) + L-histidyl-[protein]. The phosphoenolpyruvate-dependent sugar phosphotransferase system (sugar PTS), a major carbohydrate active transport system, catalyzes the phosphorylation of incoming sugar substrates concomitantly with their translocation across the cell membrane. The enzyme II CmtAB PTS system is involved in D-mannitol transport. In Streptococcus pneumoniae serotype 4 (strain ATCC BAA-334 / TIGR4), this protein is PTS system mannitol-specific EIICB component (mtlA).